Reading from the N-terminus, the 668-residue chain is UvrABC system protein B (668 aa).

The Helicase ATP-binding domain occupies 25–170; the sequence is NSILLGNKYQ…FVGQKISIKE (146 aa). 38-45 lines the ATP pocket; it reads GVTGSGKT. Positions 91-114 match the Beta-hairpin motif; sequence YYDYYQPESYVPSKDLFIEKEATI. Residues 429 to 595 form the Helicase C-terminal domain; it reads QMEDLYSEIQ…TIVKKIQNIL (167 aa). Residues 622–657 form the UVR domain; it reads KKLIDKLKFDLEEAVNDERFEDAIVLRDKIKELSSK.

Belongs to the UvrB family. In terms of assembly, forms a heterotetramer with UvrA during the search for lesions. Interacts with UvrC in an incision complex.

The protein resides in the cytoplasm. Functionally, the UvrABC repair system catalyzes the recognition and processing of DNA lesions. A damage recognition complex composed of 2 UvrA and 2 UvrB subunits scans DNA for abnormalities. Upon binding of the UvrA(2)B(2) complex to a putative damaged site, the DNA wraps around one UvrB monomer. DNA wrap is dependent on ATP binding by UvrB and probably causes local melting of the DNA helix, facilitating insertion of UvrB beta-hairpin between the DNA strands. Then UvrB probes one DNA strand for the presence of a lesion. If a lesion is found the UvrA subunits dissociate and the UvrB-DNA preincision complex is formed. This complex is subsequently bound by UvrC and the second UvrB is released. If no lesion is found, the DNA wraps around the other UvrB subunit that will check the other stand for damage. The sequence is that of UvrABC system protein B from Borreliella burgdorferi (strain ZS7) (Borrelia burgdorferi).